The chain runs to 138 residues: Probable histone H2AXb (138 aa).

A compositionally biased stretch (gly residues) spans 1–10 (MSSAGGGGGR). Residues 1 to 24 (MSSAGGGGGRGKSKGSKSVSRSSK) are disordered. Serine 135 carries the phosphoserine; by ATM and ATR modification. The [ST]-Q motif motif lies at 135 to 136 (SQ).

The protein belongs to the histone H2A family. In terms of assembly, the nucleosome is a histone octamer containing two molecules each of H2A, H2B, H3 and H4 assembled in one H3-H4 heterotetramer and two H2A-H2B heterodimers. The octamer wraps approximately 147 bp of DNA. Interacts with numerous proteins required for DNA damage signaling and repair when phosphorylated on Ser-135. In terms of processing, phosphorylated to form H2AXS139ph (gamma-H2AX) in response to DNA double strand breaks (DSBs) generated by exogenous genotoxic agents and by stalled replication forks, and may also occur during meiotic recombination events. Phosphorylation can extend up to several thousand nucleosomes from the actual site of the DSB and may mark the surrounding chromatin for recruitment of proteins required for DNA damage signaling and repair. Widespread phosphorylation may also serve to amplify the damage signal or aid repair of persistent lesions. H2AXS139ph in response to ionizing radiation is mediated by ATM while defects in DNA replication induce H2AXS139ph subsequent to activation of ATR. Dephosphorylation of H2AXS139ph by PP2A is required for DNA DSB repair.

Its subcellular location is the nucleus. The protein resides in the chromosome. Functionally, variant histone H2A which replaces conventional H2A in a subset of nucleosomes. Nucleosomes wrap and compact DNA into chromatin, limiting DNA accessibility to the cellular machineries which require DNA as a template. Histones thereby play a central role in transcription regulation, DNA repair, DNA replication and chromosomal stability. DNA accessibility is regulated via a complex set of post-translational modifications of histones, also called histone code, and nucleosome remodeling. Required for checkpoint-mediated arrest of cell cycle progression in response to low doses of ionizing radiation and for efficient repair of DNA double strand breaks (DSBs) specifically when modified by C-terminal phosphorylation. The protein is Probable histone H2AXb of Oryza sativa subsp. indica (Rice).